Consider the following 568-residue polypeptide: 2-succinyl-5-enolpyruvyl-6-hydroxy-3-cyclohexene-1-carboxylate synthase (568 aa).

It belongs to the TPP enzyme family. MenD subfamily. As to quaternary structure, homodimer. It depends on Mg(2+) as a cofactor. Mn(2+) serves as cofactor. Requires thiamine diphosphate as cofactor.

The catalysed reaction is isochorismate + 2-oxoglutarate + H(+) = 5-enolpyruvoyl-6-hydroxy-2-succinyl-cyclohex-3-ene-1-carboxylate + CO2. Its pathway is quinol/quinone metabolism; 1,4-dihydroxy-2-naphthoate biosynthesis; 1,4-dihydroxy-2-naphthoate from chorismate: step 2/7. It functions in the pathway quinol/quinone metabolism; menaquinone biosynthesis. Catalyzes the thiamine diphosphate-dependent decarboxylation of 2-oxoglutarate and the subsequent addition of the resulting succinic semialdehyde-thiamine pyrophosphate anion to isochorismate to yield 2-succinyl-5-enolpyruvyl-6-hydroxy-3-cyclohexene-1-carboxylate (SEPHCHC). This is 2-succinyl-5-enolpyruvyl-6-hydroxy-3-cyclohexene-1-carboxylate synthase from Haemophilus influenzae (strain 86-028NP).